A 35-amino-acid chain; its full sequence is Photosystem II reaction center protein T (35 aa).

A helical transmembrane segment spans residues 3–23 (ALVYTFLLVSTLGIIFFAIFF).

It belongs to the PsbT family. As to quaternary structure, PSII is composed of 1 copy each of membrane proteins PsbA, PsbB, PsbC, PsbD, PsbE, PsbF, PsbH, PsbI, PsbJ, PsbK, PsbL, PsbM, PsbT, PsbY, PsbZ, Psb30/Ycf12, at least 3 peripheral proteins of the oxygen-evolving complex and a large number of cofactors. It forms dimeric complexes.

Its subcellular location is the plastid. It is found in the chloroplast thylakoid membrane. Found at the monomer-monomer interface of the photosystem II (PS II) dimer, plays a role in assembly and dimerization of PSII. PSII is a light-driven water plastoquinone oxidoreductase, using light energy to abstract electrons from H(2)O, generating a proton gradient subsequently used for ATP formation. The polypeptide is Photosystem II reaction center protein T (Cabomba caroliniana (Carolina fanwort)).